We begin with the raw amino-acid sequence, 369 residues long: Actin-related protein 2/3 complex subunit 1B-A (369 aa).

WD repeat units follow at residues Phe-6–Ile-45, Glu-50–Thr-89, Arg-94–Lys-135, Pro-140–Arg-179, Ser-200–Ser-239, Thr-242–Gly-282, and Leu-321–Lys-364.

This sequence belongs to the WD repeat ARPC1 family. As to quaternary structure, component of the Arp2/3 complex composed of actr2/arp2, actr3/arp3, arpc1 (arpc1a or arpc1b), arpc2, arpc3, arpc4 and arpc5.

Its subcellular location is the cytoplasm. It is found in the cytoskeleton. The protein localises to the nucleus. Component of the Arp2/3 complex, a multiprotein complex that mediates actin polymerization upon stimulation by nucleation-promoting factor (NPF). The Arp2/3 complex mediates the formation of branched actin networks in the cytoplasm, providing the force for cell motility. In addition to its role in the cytoplasmic cytoskeleton, the Arp2/3 complex also promotes actin polymerization in the nucleus, thereby regulating gene transcription and repair of damaged DNA. The Arp2/3 complex promotes homologous recombination (HR) repair in response to DNA damage by promoting nuclear actin polymerization, leading to drive motility of double-strand breaks (DSBs). This is Actin-related protein 2/3 complex subunit 1B-A (arpc1b-a) from Xenopus laevis (African clawed frog).